A 227-amino-acid chain; its full sequence is Acyl-protein thioesterase 1 (227 aa).

Catalysis depends on charge relay system residues Ser119, Asp173, and His207.

This sequence belongs to the AB hydrolase superfamily. AB hydrolase 2 family.

Its subcellular location is the cytoplasm. The protein resides in the nucleus. The catalysed reaction is S-hexadecanoyl-L-cysteinyl-[protein] + H2O = L-cysteinyl-[protein] + hexadecanoate + H(+). Functionally, hydrolyzes fatty acids from S-acylated cysteine residues in proteins with a strong preference for palmitoylated G-alpha proteins over other acyl substrates. Mediates the deacylation of G-alpha proteins such as GPA1 in vivo, but has weak or no activity toward palmitoylated Ras proteins. Has weak lysophospholipase activity in vitro; however such activity may not exist in vivo. The sequence is that of Acyl-protein thioesterase 1 from Yarrowia lipolytica (strain CLIB 122 / E 150) (Yeast).